Here is an 81-residue protein sequence, read N- to C-terminus: ATP synthase subunit c (81 aa).

Transmembrane regions (helical) follow at residues 7–27 (AASV…PGLG) and 57–77 (LAFM…LLFA).

Belongs to the ATPase C chain family. As to quaternary structure, F-type ATPases have 2 components, F(1) - the catalytic core - and F(0) - the membrane proton channel. F(1) has five subunits: alpha(3), beta(3), gamma(1), delta(1), epsilon(1). F(0) has four main subunits: a(1), b(1), b'(1) and c(10-14). The alpha and beta chains form an alternating ring which encloses part of the gamma chain. F(1) is attached to F(0) by a central stalk formed by the gamma and epsilon chains, while a peripheral stalk is formed by the delta, b and b' chains.

It localises to the cellular thylakoid membrane. Functionally, f(1)F(0) ATP synthase produces ATP from ADP in the presence of a proton or sodium gradient. F-type ATPases consist of two structural domains, F(1) containing the extramembraneous catalytic core and F(0) containing the membrane proton channel, linked together by a central stalk and a peripheral stalk. During catalysis, ATP synthesis in the catalytic domain of F(1) is coupled via a rotary mechanism of the central stalk subunits to proton translocation. In terms of biological role, key component of the F(0) channel; it plays a direct role in translocation across the membrane. A homomeric c-ring of between 10-14 subunits forms the central stalk rotor element with the F(1) delta and epsilon subunits. This Synechococcus sp. (strain JA-3-3Ab) (Cyanobacteria bacterium Yellowstone A-Prime) protein is ATP synthase subunit c.